The sequence spans 150 residues: Dual specificity protein phosphatase 23 (150 aa).

Residues 7–150 (NFSWVLPGRL…AVFQFYQRTK (144 aa)) form the Tyrosine-protein phosphatase domain. Cys-95 (phosphocysteine intermediate) is an active-site residue.

It belongs to the protein-tyrosine phosphatase family. Non-receptor class dual specificity subfamily. As to expression, widely expressed. Highly expressed in spleen, prostate, colon, adrenal gland, mammary gland, thyroid and trachea. Expressed at lower level in uterus, small intestine, bladder, bone marrow, brain, spinal cord and stomach.

It localises to the cytoplasm. The protein localises to the cytosol. Its subcellular location is the nucleus. The catalysed reaction is O-phospho-L-tyrosyl-[protein] + H2O = L-tyrosyl-[protein] + phosphate. It catalyses the reaction O-phospho-L-seryl-[protein] + H2O = L-seryl-[protein] + phosphate. The enzyme catalyses O-phospho-L-threonyl-[protein] + H2O = L-threonyl-[protein] + phosphate. Functionally, protein phosphatase that mediates dephosphorylation of proteins phosphorylated on Tyr and Ser/Thr residues. In vitro, it can dephosphorylate p44-ERK1 (MAPK3) but not p54 SAPK-beta (MAPK10) in vitro. Able to enhance activation of JNK and p38 (MAPK14). This is Dual specificity protein phosphatase 23 (DUSP23) from Homo sapiens (Human).